Reading from the N-terminus, the 1808-residue chain is Tenascin (1808 aa).

An N-terminal signal peptide occupies residues 1-22 (MGLPSQVLACAILGLLYQHASG). Positions 23–33 (GLIKRIIRQKR) are excised as a propeptide. Residue asparagine 38 is glycosylated (N-linked (GlcNAc...) asparagine). Serine 72 carries O-linked (Xyl...) (chondroitin sulfate) serine glycosylation. A coiled-coil region spans residues 118 to 142 (DIKDLLSRLEELEGLVSSLREQCAS). Asparagine 168 and asparagine 186 each carry an N-linked (GlcNAc...) asparagine glycan. The 13-residue stretch at 176-188 (CVCEPGWKGPNCS) folds into the EGF-like 1; incomplete domain. EGF-like domains follow at residues 188–219 (SEPACPRNCLNRGLCVRGKCICEEGFTGEDCS), 219–250 (SQAACPSDCNDQGKCVDGVCVCFEGYTGPDCG), 250–281 (GEELCPHGCGIHGRCVGGRCVCHEGFTGEDCN), 281–312 (NEPLCPNNCHNRGRCVDNECVCDEGYTGEDCG), 312–343 (GELICPNDCFDRGRCINGTCFCEEGYTGEDCG), 343–374 (GELTCPNNCNGNGRCENGLCVCHEGFVGDDCS), 374–405 (SQKRCPKDCNNRGHCVDGRCVCHEGYLGEDCG), 405–436 (GELRCPNDCHNRGRCINGQCVCDEGFIGEDCG), 436–467 (GELRCPNDCHNRGRCVNGQCECHEGFIGEDCG), 467–498 (GELRCPNDCNSHGRCVNGQCVCDEGYTGEDCG), 498–529 (GELRCPNDCHNRGRCVEGRCVCDNGFMGEDCG), 529–560 (GELSCPNDCHQHGRCVDGRCVCHEGFTGEDCR), and 560–591 (RERSCPNDCNNVGRCVEGRCVCEEGYMGIDCS). 39 disulfide bridges follow: cysteine 192–cysteine 202, cysteine 196–cysteine 207, cysteine 209–cysteine 218, cysteine 223–cysteine 233, cysteine 227–cysteine 238, cysteine 240–cysteine 249, cysteine 254–cysteine 264, cysteine 258–cysteine 269, cysteine 271–cysteine 280, cysteine 285–cysteine 295, cysteine 289–cysteine 300, cysteine 302–cysteine 311, cysteine 316–cysteine 326, cysteine 320–cysteine 331, cysteine 333–cysteine 342, cysteine 347–cysteine 357, cysteine 351–cysteine 362, cysteine 364–cysteine 373, cysteine 378–cysteine 388, cysteine 382–cysteine 393, cysteine 395–cysteine 404, cysteine 409–cysteine 419, cysteine 413–cysteine 424, cysteine 426–cysteine 435, cysteine 440–cysteine 450, cysteine 444–cysteine 455, cysteine 457–cysteine 466, cysteine 471–cysteine 481, cysteine 475–cysteine 486, cysteine 488–cysteine 497, cysteine 502–cysteine 512, cysteine 506–cysteine 517, cysteine 519–cysteine 528, cysteine 533–cysteine 543, cysteine 537–cysteine 548, cysteine 550–cysteine 559, cysteine 564–cysteine 574, cysteine 568–cysteine 579, and cysteine 581–cysteine 590. N-linked (GlcNAc...) asparagine glycosylation is present at asparagine 328. Fibronectin type-III domains lie at 595 to 685 (PPTE…LPAP), 686 to 775 (EGLK…TKLD), 776 to 866 (APSQ…DLDA), 867 to 957 (PRNL…TDLD), 958 to 1046 (NPKD…EEEP), 1047 to 1138 (ELGN…AHPE), 1139 to 1228 (VGEL…EAEP), 1229 to 1318 (EVDN…TVVG), 1319 to 1408 (SPKG…ALDS), 1409 to 1495 (PSGL…TGLD), and 1496 to 1584 (APKD…TGLL). 4 N-linked (GlcNAc...) asparagine glycosylation sites follow: asparagine 603, asparagine 643, asparagine 751, and asparagine 759. 6 N-linked (GlcNAc...) asparagine glycosylation sites follow: asparagine 1050, asparagine 1090, asparagine 1101, asparagine 1112, asparagine 1153, and asparagine 1183. An N-linked (GlcNAc...) asparagine glycan is attached at asparagine 1416. In terms of domain architecture, Fibrinogen C-terminal spans 1582–1797 (GLLYPYPKDC…FAEMKLRPSS (216 aa)). N-linked (GlcNAc...) asparagine glycosylation is found at asparagine 1736 and asparagine 1769.

It belongs to the tenascin family. As to quaternary structure, homohexamer; disulfide-linked. A homotrimer may be formed in the triple coiled-coil region and may be stabilized by disulfide rings at both ends. Two of such half-hexabrachions may be disulfide linked within the central globule. Interacts with CSPG5. As to expression, expressed in the brain.

It localises to the secreted. It is found in the extracellular space. The protein resides in the extracellular matrix. Its function is as follows. Extracellular matrix protein implicated in guidance of migrating neurons as well as axons during development, synaptic plasticity as well as neuronal regeneration. Ligand for integrins alpha-8/beta-1, alpha-9/beta-1, alpha-V/beta-3 and alpha-V/beta-6. The protein is Tenascin (TNC) of Gallus gallus (Chicken).